We begin with the raw amino-acid sequence, 62 residues long: Potassium channel toxin kappa-KTx 3.3 (62 aa).

The signal sequence occupies residues 1-26 (MKSTLMTASLLILVLLSIVDYASVYA). A propeptide spanning residues 27–36 (ELIDSEISME) is cleaved from the precursor. Cystine bridges form between C43-C61 and C47-C57.

Belongs to the short scorpion toxin superfamily. Potassium channel inhibitor kappa-KTx family. Kappa-KTx 3 subfamily. Expressed by the venom gland.

The protein resides in the secreted. Functionally, potassium channel inhibitor (Kv). In Heterometrus petersii (Asian forest scorpion), this protein is Potassium channel toxin kappa-KTx 3.3.